The chain runs to 297 residues: Ribosomal RNA small subunit methyltransferase H (297 aa).

Residues 30-32, D48, F75, D96, and Q103 contribute to the S-adenosyl-L-methionine site; that span reads GGY.

It belongs to the methyltransferase superfamily. RsmH family.

It localises to the cytoplasm. It catalyses the reaction cytidine(1402) in 16S rRNA + S-adenosyl-L-methionine = N(4)-methylcytidine(1402) in 16S rRNA + S-adenosyl-L-homocysteine + H(+). In terms of biological role, specifically methylates the N4 position of cytidine in position 1402 (C1402) of 16S rRNA. The sequence is that of Ribosomal RNA small subunit methyltransferase H from Ehrlichia canis (strain Jake).